Here is a 360-residue protein sequence, read N- to C-terminus: WD repeat domain phosphoinositide-interacting protein 4 (360 aa).

WD repeat units follow at residues 1-34, 40-84, 92-128, 133-174, 183-222, 227-266, and 284-329; these read MTQQ…IYNV, KGHL…IWDD, KEKL…VYSF, RKLF…LVDL, SAPF…LFDT, KLVE…IFAL, and GPMI…ICVD. The L/FRRG motif motif lies at 231–234; the sequence is LRRG.

This sequence belongs to the WD repeat PROPPIN family. As to quaternary structure, interacts with WIPI1. Interacts with WIPI2. Interacts with ATG2A and ATG2B. Interacts with ULK1. May interact with the PRKAA1, PRKAA2, PRKAB1 and PRKAG1 subunits of the AMPK kinase. May interact with NUDC. In terms of tissue distribution, ubiquitously expressed, with high expression in skeletal muscle and heart. Weakly expressed in liver and placenta. Expression is down-regulated in pancreatic and in kidney tumors.

The protein localises to the preautophagosomal structure. It localises to the cytoplasm. Its activity is regulated as follows. Activated upon amino-acid starvation. In terms of biological role, component of the autophagy machinery that controls the major intracellular degradation process by which cytoplasmic materials are packaged into autophagosomes and delivered to lysosomes for degradation. Binds phosphatidylinositol 3-phosphate (PtdIns3P). Activated by the STK11/AMPK signaling pathway upon starvation, WDR45 is involved in autophagosome assembly downstream of WIPI2, regulating the size of forming autophagosomes. Together with WIPI1, promotes ATG2 (ATG2A or ATG2B)-mediated lipid transfer by enhancing ATG2-association with phosphatidylinositol 3-monophosphate (PI3P)-containing membranes. Probably recruited to membranes through its PtdIns3P activity. The polypeptide is WD repeat domain phosphoinositide-interacting protein 4 (WDR45) (Homo sapiens (Human)).